A 574-amino-acid polypeptide reads, in one-letter code: Septation ring formation regulator EzrA (574 aa).

The Extracellular portion of the chain corresponds to 1-7 (MSSGLIL). Residues 8–26 (LIVAIVLLVIIAYLVGVII) traverse the membrane as a helical segment. Residues 27 to 574 (RKRNDTLITS…YEKTRERIRF (548 aa)) are Cytoplasmic-facing. 4 coiled-coil regions span residues 102–131 (NFIR…REAL), 161–190 (ENED…FVAL), 276–379 (VTLD…QQEK), and 459–493 (QLEA…NLEE).

This sequence belongs to the EzrA family.

It localises to the cell membrane. In terms of biological role, negative regulator of FtsZ ring formation; modulates the frequency and position of FtsZ ring formation. Inhibits FtsZ ring formation at polar sites. Interacts either with FtsZ or with one of its binding partners to promote depolymerization. This is Septation ring formation regulator EzrA from Streptococcus equi subsp. zooepidemicus (strain MGCS10565).